A 71-amino-acid polypeptide reads, in one-letter code: Small ribosomal subunit protein bS18 (71 aa).

Belongs to the bacterial ribosomal protein bS18 family. In terms of assembly, part of the 30S ribosomal subunit. Forms a tight heterodimer with protein bS6.

In terms of biological role, binds as a heterodimer with protein bS6 to the central domain of the 16S rRNA, where it helps stabilize the platform of the 30S subunit. The chain is Small ribosomal subunit protein bS18 from Nostoc sp. (strain PCC 7120 / SAG 25.82 / UTEX 2576).